The chain runs to 421 residues: Tyrosine-protein phosphatase non-receptor type 20 (421 aa).

Positions 1–58 are disordered; sequence MSSPGNVRQKHGRDNDEHEGDSDDLNLQKSLPSSSQQKTPTKPVFGNKVNSESVKTSH. Over residues 27–41 the composition is skewed to low complexity; that stretch reads LQKSLPSSSQQKTPT. The segment covering 48-58 has biased composition (polar residues); sequence KVNSESVKTSH. Ser76 bears the Phosphoserine mark. Positions 93 to 116 are disordered; sequence RWSSVDPESAGPSKTVSTVLSESS. Positions 104–116 are enriched in polar residues; sequence PSKTVSTVLSESS. Ser122 carries the phosphoserine modification. One can recognise a Tyrosine-protein phosphatase domain in the interval 160–413; that stretch reads IIREFLELEE…QFCYEIVLEV (254 aa). Substrate is bound by residues Asp324, 354 to 360, and Gln398; that span reads CSAGVGR. The active-site Phosphocysteine intermediate is the Cys354.

The protein belongs to the protein-tyrosine phosphatase family. Non-receptor class subfamily.

Its subcellular location is the nucleus. It is found in the cytoplasm. The protein localises to the cytoskeleton. The protein resides in the microtubule organizing center. It localises to the centrosome. It carries out the reaction O-phospho-L-tyrosyl-[protein] + H2O = L-tyrosyl-[protein] + phosphate. Functionally, tyrosine-protein phosphatase targeted to sites of actin polymerization in response of varied extracellular stimuli. Has tyrosine phosphatase activity towards various tyrosyl phosphorylated substrates. This Rattus norvegicus (Rat) protein is Tyrosine-protein phosphatase non-receptor type 20 (Ptpn20).